We begin with the raw amino-acid sequence, 323 residues long: DNA repair and recombination protein RadA (323 aa).

114-121 is an ATP binding site; the sequence is GEFGSGKT.

Belongs to the eukaryotic RecA-like protein family.

In terms of biological role, involved in DNA repair and in homologous recombination. Binds and assemble on single-stranded DNA to form a nucleoprotein filament. Hydrolyzes ATP in a ssDNA-dependent manner and promotes DNA strand exchange between homologous DNA molecules. The sequence is that of DNA repair and recombination protein RadA from Picrophilus torridus (strain ATCC 700027 / DSM 9790 / JCM 10055 / NBRC 100828 / KAW 2/3).